The following is a 331-amino-acid chain: MIAMGLEGSANKLGVGIMRDDEILANERLTYAPPPGEGFIPVKTAEHHRSRILGLVAVSLEKAGVDLDDVDIFCYTKGPGMGLPLSVVATVARTLSLYCNKPLVPVNHCIAHIEMGRFITKASNPVILYASGGNTQIIAYHNRRYKIFGETLDIAVGNCIDRFARALKLPNFPAPGLSVERYAKLGKNYIELPYVVKGMDVSFSGILSNIKRKIAEDEQVKRDLCYSLQETVFSALVEVTERAMAFSSSKEVLIVGGVGCNLRLQEMMGIMARERGGVCYATDERFCIDNGVMIAYVGMLMAKSGAAFKLGECFVTQRYRTDSVEVTWRDY.

H108, H112, and Y129 together coordinate a divalent metal cation. Substrate contacts are provided by residues 129 to 133 (YASGG), D161, G176, E180, and N261. D289 contacts a divalent metal cation.

Belongs to the KAE1 / TsaD family. In terms of assembly, component of the EKC/KEOPS complex composed of at least BUD32, CGI121, GON7, KAE1 and PCC1; the whole complex dimerizes. Requires a divalent metal cation as cofactor.

Its subcellular location is the cytoplasm. It localises to the nucleus. It catalyses the reaction L-threonylcarbamoyladenylate + adenosine(37) in tRNA = N(6)-L-threonylcarbamoyladenosine(37) in tRNA + AMP + H(+). Functionally, component of the EKC/KEOPS complex that is required for the formation of a threonylcarbamoyl group on adenosine at position 37 (t(6)A37) in tRNAs that read codons beginning with adenine. The complex is probably involved in the transfer of the threonylcarbamoyl moiety of threonylcarbamoyl-AMP (TC-AMP) to the N6 group of A37. KAE1 likely plays a direct catalytic role in this reaction, but requires other protein(s) of the complex to fulfill this activity. The EKC/KEOPS complex also promotes both telomere uncapping and telomere elongation. The complex is required for efficient recruitment of transcriptional coactivators. The sequence is that of tRNA N6-adenosine threonylcarbamoyltransferase from Encephalitozoon cuniculi (strain GB-M1) (Microsporidian parasite).